The sequence spans 121 residues: 18 kDa learning-associated protein of slug (121 aa).

Disordered stretches follow at residues 44–67 and 95–121; these read TMKTTEPIQENKTSEGTSTDGSME and AVKKQKQKLNKLKIKKKSGKVSKAIKW. Polar residues predominate over residues 45–64; the sequence is MKTTEPIQENKTSEGTSTDG.

The protein belongs to the learning-associated protein family. In terms of tissue distribution, expressed predominantly in cerebral ganglia (at protein level). The mRNA is highly expressed in cerebral ganglia, and is detected at lower levels in visceral-pedal ganglia, head, and body, but is not detected in the tail.

The protein resides in the cytoplasm. It is found in the secreted. Functionally, may be involved in modulating long-term memory formation and retention, at least with respect to odor-taste associative learning. This chain is 18 kDa learning-associated protein of slug, found in Lehmannia marginata (Tree slug).